We begin with the raw amino-acid sequence, 307 residues long: 3-ketodihydrosphingosine reductase TSC10 (307 aa).

Leucine 11 lines the NADP(+) pocket. NADPH is bound by residues glycine 14, serine 16, and glycine 18. The GXSXG motif lies at 14 to 18; it reads GGSQG. Leucine 19 serves as a coordination point for NADP(+). 3 residues coordinate NADPH: arginine 40, lysine 44, and leucine 74. Residue serine 147 is the Proton donor of the active site. Residues tyrosine 161, lysine 165, and serine 194 each contribute to the NADP(+) site. Catalysis depends on tyrosine 161, which acts as the Proton acceptor. The active-site Lowers pKa of active site Tyr is lysine 165. The chain crosses the membrane as a helical span at residues 261 to 281; that stretch reads YFLWPLGWLLGALVNLLVVPI.

The protein belongs to the short-chain dehydrogenases/reductases (SDR) family.

The protein localises to the endoplasmic reticulum membrane. The catalysed reaction is sphinganine + NADP(+) = 3-oxosphinganine + NADPH + H(+). It participates in lipid metabolism; sphingolipid metabolism. Its function is as follows. Catalyzes the reduction of 3'-oxosphinganine (3-ketodihydrosphingosine/KDS) to sphinganine (dihydrosphingosine/DHS), the second step of de novo sphingolipid biosynthesis. The chain is 3-ketodihydrosphingosine reductase TSC10 (TSC10) from Eremothecium gossypii (strain ATCC 10895 / CBS 109.51 / FGSC 9923 / NRRL Y-1056) (Yeast).